Here is a 144-residue protein sequence, read N- to C-terminus: Probable DNA-directed RNA polymerases I and III subunit RPAC2 (144 aa).

The segment at 14-47 (KVEAETMEVDEQPQETPQVDDEEDLNVPSKKKME) is disordered. The segment covering 18–38 (ETMEVDEQPQETPQVDDEEDL) has biased composition (acidic residues).

The protein belongs to the archaeal Rpo11/eukaryotic RPB11/RPC19 RNA polymerase subunit family. As to quaternary structure, component of the RNA polymerase I (Pol I) and RNA polymerase III (Pol III) complexes consisting of at least 13 and 17 subunits, respectively.

Its subcellular location is the nucleus. In terms of biological role, DNA-dependent RNA polymerase catalyzes the transcription of DNA into RNA using the four ribonucleoside triphosphates as substrates. Common core component of RNA polymerases I and III which synthesize ribosomal RNA precursors and small RNAs, such as 5S rRNA and tRNAs, respectively. This chain is Probable DNA-directed RNA polymerases I and III subunit RPAC2 (rpac-19), found in Caenorhabditis elegans.